A 282-amino-acid chain; its full sequence is Dihydroorotate dehydrogenase B (NAD(+)), electron transfer subunit homolog (282 aa).

Positions 2–100 constitute an FAD-binding FR-type domain; it reads GGTALNEIVK…VGPLGNPSEI (99 aa). Positions 225, 228, and 240 each coordinate [2Fe-2S] cluster.

It belongs to the PyrK family. [2Fe-2S] cluster serves as cofactor. Requires FAD as cofactor.

The protein is Dihydroorotate dehydrogenase B (NAD(+)), electron transfer subunit homolog of Thermotoga maritima (strain ATCC 43589 / DSM 3109 / JCM 10099 / NBRC 100826 / MSB8).